A 362-amino-acid chain; its full sequence is Phosphoserine aminotransferase (362 aa).

Position 43 (arginine 43) interacts with L-glutamate. Pyridoxal 5'-phosphate-binding positions include alanine 77–threonine 78, tryptophan 103, threonine 153, aspartate 173, and glutamine 196. Lysine 197 carries the N6-(pyridoxal phosphate)lysine modification. Asparagine 238 to threonine 239 is a binding site for pyridoxal 5'-phosphate.

It belongs to the class-V pyridoxal-phosphate-dependent aminotransferase family. SerC subfamily. In terms of assembly, homodimer. Requires pyridoxal 5'-phosphate as cofactor.

It localises to the cytoplasm. The catalysed reaction is O-phospho-L-serine + 2-oxoglutarate = 3-phosphooxypyruvate + L-glutamate. It carries out the reaction 4-(phosphooxy)-L-threonine + 2-oxoglutarate = (R)-3-hydroxy-2-oxo-4-phosphooxybutanoate + L-glutamate. The protein operates within amino-acid biosynthesis; L-serine biosynthesis; L-serine from 3-phospho-D-glycerate: step 2/3. Its pathway is cofactor biosynthesis; pyridoxine 5'-phosphate biosynthesis; pyridoxine 5'-phosphate from D-erythrose 4-phosphate: step 3/5. Catalyzes the reversible conversion of 3-phosphohydroxypyruvate to phosphoserine and of 3-hydroxy-2-oxo-4-phosphonooxybutanoate to phosphohydroxythreonine. This chain is Phosphoserine aminotransferase, found in Xylella fastidiosa (strain Temecula1 / ATCC 700964).